The chain runs to 288 residues: Quinate/shikimate dehydrogenase (288 aa).

Substrate contacts are provided by lysine 71 and aspartate 107. Residues 132–135 (AGGA), 155–158 (NRRD), lysine 205, 232–235 (CVYN), and glycine 255 contribute to the NAD(+) site.

The protein belongs to the shikimate dehydrogenase family. As to quaternary structure, homodimer.

It carries out the reaction L-quinate + NAD(+) = 3-dehydroquinate + NADH + H(+). The enzyme catalyses L-quinate + NADP(+) = 3-dehydroquinate + NADPH + H(+). The catalysed reaction is shikimate + NADP(+) = 3-dehydroshikimate + NADPH + H(+). It catalyses the reaction shikimate + NAD(+) = 3-dehydroshikimate + NADH + H(+). The protein operates within metabolic intermediate biosynthesis; chorismate biosynthesis; chorismate from D-erythrose 4-phosphate and phosphoenolpyruvate: step 4/7. Its function is as follows. The actual biological function of YdiB remains unclear, nor is it known whether 3-dehydroshikimate or quinate represents the natural substrate. Catalyzes the reversible NAD-dependent reduction of both 3-dehydroshikimate (DHSA) and 3-dehydroquinate to yield shikimate (SA) and quinate, respectively. It can use both NAD or NADP for catalysis, however it has higher catalytic efficiency with NAD. The chain is Quinate/shikimate dehydrogenase from Escherichia coli O7:K1 (strain IAI39 / ExPEC).